A 292-amino-acid polypeptide reads, in one-letter code: ATP synthase gamma chain (292 aa).

This sequence belongs to the ATPase gamma chain family. In terms of assembly, F-type ATPases have 2 components, CF(1) - the catalytic core - and CF(0) - the membrane proton channel. CF(1) has five subunits: alpha(3), beta(3), gamma(1), delta(1), epsilon(1). CF(0) has three main subunits: a, b and c.

It localises to the cell inner membrane. Functionally, produces ATP from ADP in the presence of a proton gradient across the membrane. The gamma chain is believed to be important in regulating ATPase activity and the flow of protons through the CF(0) complex. In Nitrobacter winogradskyi (strain ATCC 25391 / DSM 10237 / CIP 104748 / NCIMB 11846 / Nb-255), this protein is ATP synthase gamma chain.